We begin with the raw amino-acid sequence, 309 residues long: Ribosomal RNA small subunit methyltransferase H (309 aa).

S-adenosyl-L-methionine is bound by residues 33–35 (GGH), Asp53, Phe79, Asp100, and Gln107.

This sequence belongs to the methyltransferase superfamily. RsmH family.

It is found in the cytoplasm. The catalysed reaction is cytidine(1402) in 16S rRNA + S-adenosyl-L-methionine = N(4)-methylcytidine(1402) in 16S rRNA + S-adenosyl-L-homocysteine + H(+). Its function is as follows. Specifically methylates the N4 position of cytidine in position 1402 (C1402) of 16S rRNA. The chain is Ribosomal RNA small subunit methyltransferase H from Clostridium kluyveri (strain NBRC 12016).